We begin with the raw amino-acid sequence, 380 residues long: Cytochrome b (380 aa).

The next 4 helical transmembrane spans lie at 34-54 (FGSL…LLAM), 78-99 (WLIR…YLHI), 114-134 (WNTG…GYVL), and 179-199 (FFAL…IHLT). Heme b is bound by residues H84 and H98. Residues H183 and H197 each contribute to the heme b site. H202 lines the a ubiquinone pocket. Helical transmembrane passes span 227–247 (LKDI…ALFS), 289–309 (LGGV…PFLH), 321–341 (LSQL…WVGS), and 348–368 (FIII…ILFP).

The protein belongs to the cytochrome b family. The cytochrome bc1 complex contains 11 subunits: 3 respiratory subunits (MT-CYB, CYC1 and UQCRFS1), 2 core proteins (UQCRC1 and UQCRC2) and 6 low-molecular weight proteins (UQCRH/QCR6, UQCRB/QCR7, UQCRQ/QCR8, UQCR10/QCR9, UQCR11/QCR10 and a cleavage product of UQCRFS1). This cytochrome bc1 complex then forms a dimer. It depends on heme b as a cofactor.

Its subcellular location is the mitochondrion inner membrane. Component of the ubiquinol-cytochrome c reductase complex (complex III or cytochrome b-c1 complex) that is part of the mitochondrial respiratory chain. The b-c1 complex mediates electron transfer from ubiquinol to cytochrome c. Contributes to the generation of a proton gradient across the mitochondrial membrane that is then used for ATP synthesis. In Daption capense (Cape petrel), this protein is Cytochrome b (MT-CYB).